A 179-amino-acid polypeptide reads, in one-letter code: Signal peptidase complex catalytic subunit SEC11A (179 aa).

The Cytoplasmic portion of the chain corresponds to 1 to 16; sequence MLSLDFLDDVRRMNKR. Residues 17 to 36 form a helical; Signal-anchor for type II membrane protein membrane-spanning segment; sequence QLYYQVLNFGMIVSSALMIW. At 37–179 the chain is on the lumenal side; it reads KGLMLITGSE…LGLFVLVHRE (143 aa). Catalysis depends on charge relay system residues serine 56, histidine 96, and aspartate 122. The segment at 165–176 is C-terminal short (CTS) helix; sequence AVLFLLGLFVLV.

It belongs to the peptidase S26B family. As to quaternary structure, component of the signal peptidase complex paralog A (SPC-A) composed of a catalytic subunit SEC11A and three accessory subunits SPCS1, SPCS2 and SPCS3. Within the complex, interacts with SPCS2 and SPCS3. The complex induces a local thinning of the ER membrane which is used to measure the length of the signal peptide (SP) h-region of protein substrates. This ensures the selectivity of the complex towards h-regions shorter than 18-20 amino acids.

Its subcellular location is the endoplasmic reticulum membrane. It catalyses the reaction Cleavage of hydrophobic, N-terminal signal or leader sequences from secreted and periplasmic proteins.. Its function is as follows. Catalytic component of the signal peptidase complex (SPC) which catalyzes the cleavage of N-terminal signal sequences from nascent proteins as they are translocated into the lumen of the endoplasmic reticulum. Specifically cleaves N-terminal signal peptides that contain a hydrophobic alpha-helix (h-region) shorter than 18-20 amino acids. The chain is Signal peptidase complex catalytic subunit SEC11A (Sec11a) from Rattus norvegicus (Rat).